The primary structure comprises 97 residues: Large ribosomal subunit protein uL23 (97 aa).

This sequence belongs to the universal ribosomal protein uL23 family. In terms of assembly, part of the 50S ribosomal subunit. Contacts protein L29, and trigger factor when it is bound to the ribosome.

One of the early assembly proteins it binds 23S rRNA. One of the proteins that surrounds the polypeptide exit tunnel on the outside of the ribosome. Forms the main docking site for trigger factor binding to the ribosome. The polypeptide is Large ribosomal subunit protein uL23 (Myxococcus xanthus (strain DK1622)).